The following is a 309-amino-acid chain: Porphobilinogen deaminase (309 aa).

An S-(dipyrrolylmethanemethyl)cysteine modification is found at C241.

The protein belongs to the HMBS family. As to quaternary structure, monomer. It depends on dipyrromethane as a cofactor.

It catalyses the reaction 4 porphobilinogen + H2O = hydroxymethylbilane + 4 NH4(+). It functions in the pathway porphyrin-containing compound metabolism; protoporphyrin-IX biosynthesis; coproporphyrinogen-III from 5-aminolevulinate: step 2/4. Tetrapolymerization of the monopyrrole PBG into the hydroxymethylbilane pre-uroporphyrinogen in several discrete steps. The polypeptide is Porphobilinogen deaminase (Bacillus cereus (strain G9842)).